The sequence spans 635 residues: Sodium- and chloride-dependent creatine transporter 1 (635 aa).

Residues 1 to 28 (MAKKSAENGIYSVSGDEKKGPLIAPGPD) form a disordered region. Residues 1–60 (MAKKSAENGIYSVSGDEKKGPLIAPGPDGAPAKGDGPVGLGTPGGRLAVPPRETWTRQMD) are Cytoplasmic-facing. Phosphothreonine is present on T42. Residues 61-81 (FIMSCVGFAVGLGNVWRFPYL) traverse the membrane as a helical segment. Topologically, residues 82 to 87 (CYKNGG) are extracellular. Residues 88–108 (GVFLIPYVLIALVGGIPIFFL) traverse the membrane as a helical segment. Topologically, residues 109 to 138 (EISLGQFMKAGSINVWNICPLFKGLGYASM) are cytoplasmic. The helical transmembrane segment at 139 to 159 (VIVFYCNTYYIMVLAWGFYYL) threads the bilayer. The Extracellular portion of the chain corresponds to 160–230 (VKSFTTTLPW…LSGGLEVPGA (71 aa)). N-linked (GlcNAc...) asparagine glycans are attached at residues N192 and N197. A helical transmembrane segment spans residues 231 to 251 (LNWEVTLCLLACWVLVYFCVW). Residues 252–269 (KGVKSTGKIVYFTATFPY) lie on the Cytoplasmic side of the membrane. Residues 270-290 (VVLVVLLVRGVLLPGALDGII) form a helical membrane-spanning segment. The Extracellular portion of the chain corresponds to 291 to 304 (YYLKPDWSKLGSPQ). The chain crosses the membrane as a helical span at residues 305–325 (VWIDAGTQIFFSYAIGLGALT). The Cytoplasmic segment spans residues 326 to 341 (ALGSYNRFNNNCYKDA). The helical transmembrane segment at 342–362 (IILALINSGTSFFAGFVVFSI) threads the bilayer. Residues 363–394 (LGFMAAEQGVHISKVAESGPGLAFIAYPRAVT) are Extracellular-facing. A helical transmembrane segment spans residues 395–415 (LMPVAPLWAALFFFMLLLLGL). The Cytoplasmic segment spans residues 416–444 (DSQFVGVEGFITGLLDLLPASYYFRFQRE). The chain crosses the membrane as a helical span at residues 445 to 465 (ISVALCCALCFVIDLSMVTDG). Residues 466–479 (GMYVFQLFDYYSAS) are Extracellular-facing. The helical transmembrane segment at 480-500 (GTTLLWQAFWECVVVAWVYGA) threads the bilayer. The Cytoplasmic segment spans residues 501–520 (DRFMDDIACMIGYRPCPWMK). The helical transmembrane segment at 521–541 (WCWSFFTPLVCMGIFIFNVVY) threads the bilayer. The Extracellular segment spans residues 542–560 (YEPLVYNNTYVYPWWGEAM). N-linked (GlcNAc...) asparagine glycosylation occurs at N548. A helical transmembrane segment spans residues 561-581 (GWAFALSSMLCVPLHLLGCLL). The Cytoplasmic portion of the chain corresponds to 582-635 (RAKGTMAERWQHLTQPIWGLHHLEYRAQDADVRGLTTLTPVSESSKVVVVESVM). Residues T617 and T620 each carry the phosphothreonine modification. Position 623 is a phosphoserine (S623).

Belongs to the sodium:neurotransmitter symporter (SNF) (TC 2.A.22) family. SLC6A8 subfamily. Post-translationally, glycosylated. In terms of tissue distribution, predominantly expressed in skeletal muscle and kidney. Also found in brain, heart, colon, testis and prostate.

The protein localises to the cell membrane. It is found in the apical cell membrane. It catalyses the reaction creatine(out) + chloride(out) + 2 Na(+)(out) = creatine(in) + chloride(in) + 2 Na(+)(in). Functionally, creatine:sodium symporter which mediates the uptake of creatine. Plays an important role in supplying creatine to the brain via the blood-brain barrier. The protein is Sodium- and chloride-dependent creatine transporter 1 (SLC6A8) of Homo sapiens (Human).